Here is a 442-residue protein sequence, read N- to C-terminus: MRFRIYKRKVLILTLVVAACGFVLWSSNGRQRKSDALGPPLLDAEPVRGAGHLAVSVGIRRVSNESAAPLVPAVPRPEVDNLTLRYRSLVYQLNFDQMLRNVGNDGTWSPGELVLVVQVHNRPEYLRLLIDSLRKAQGIQEVLVIFSHDFWSAEINSLISRVDFCPVLQVFFPFSIQLYPNEFPGSDPRDCPRDLKKNAALKLGCINAEYPDSFGHYREAKFSQTKHHWWWKLHFVWERVKVLQDYTGLILFLEEDHYLAPDFYHVFKKMWKLKQQECPGCDVLSLGTYTTIRSFYGIADKVDVKTWKSTEHNMGLALTRDAYQKLIECTDTFCTYDDYNWDWTLQYLTLACLPKIWKVLVPQAPRIFHAGDCGMHHKKTCRPSTQSAQIESLLNSNKQYLFPETLVIGEKFPMAAISPPRKNGGWGDIRDHELCKSYRRLQ.

At 1–9 (MRFRIYKRK) the chain is on the cytoplasmic side. Residues 10 to 29 (VLILTLVVAACGFVLWSSNG) traverse the membrane as a helical; Signal-anchor for type II membrane protein segment. The Lumenal portion of the chain corresponds to 30 to 442 (RQRKSDALGP…ELCKSYRRLQ (413 aa)). 2 N-linked (GlcNAc...) asparagine glycosylation sites follow: asparagine 64 and asparagine 81. Substrate contacts are provided by residues 118–122 (QVHNR) and aspartate 149. Residues cysteine 191 and cysteine 205 are joined by a disulfide bond. 224–228 (QTKHH) contacts substrate. Aspartate 256 is a Mn(2+) binding site. A disulfide bridge connects residues cysteine 278 and cysteine 281. Arginine 293 contributes to the substrate binding site. 3 disulfides stabilise this stretch: cysteine 329–cysteine 352, cysteine 334–cysteine 435, and cysteine 373–cysteine 381. Histidine 369 serves as a coordination point for Mn(2+).

The protein belongs to the glycosyltransferase 16 (GT16) protein family. In terms of assembly, homodimer. Mn(2+) serves as cofactor. Detected in liver, lung, testis, kidney, brain, spleen, thymus, uterus and intestine.

The protein localises to the golgi apparatus membrane. It catalyses the reaction an N(4)-{beta-D-GlcNAc-(1-&gt;2)-alpha-D-Man-(1-&gt;3)-[alpha-D-Man-(1-&gt;6)]-beta-D-Man-(1-&gt;4)-beta-D-GlcNAc-(1-&gt;4)-beta-D-GlcNAc}-L-asparaginyl-[protein] + UDP-N-acetyl-alpha-D-glucosamine = N(4)-{beta-D-GlcNAc-(1-&gt;2)-alpha-D-Man-(1-&gt;3)-[beta-D-GlcNAc-(1-&gt;2)-alpha-D-Man-(1-&gt;6)]-beta-D-Man-(1-&gt;4)-beta-D-GlcNAc-(1-&gt;4)-beta-D-GlcNAc}-L-asparaginyl-[protein] + UDP + H(+). It participates in protein modification; protein glycosylation. Its function is as follows. Plays an essential role in protein N-glycosylation. Catalyzes the transfer of N-acetylglucosamine (GlcNAc) onto the free terminal mannose moiety in the core structure of the nascent N-linked glycan chain, giving rise to the second branch in complex glycans. The polypeptide is Alpha-1,6-mannosyl-glycoprotein 2-beta-N-acetylglucosaminyltransferase (Mgat2) (Mus musculus (Mouse)).